A 355-amino-acid polypeptide reads, in one-letter code: uncharacterized protein (355 aa).

The protein belongs to the 3-beta-HSD family.

This is an uncharacterized protein from Frog virus 3 (isolate Goorha) (FV-3).